The primary structure comprises 209 residues: Pyridoxal 5'-phosphate synthase subunit PdxT (209 aa).

58-60 (GES) is a binding site for L-glutamine. The Nucleophile role is filled by C90. L-glutamine-binding positions include R119 and 148–149 (IR). Active-site charge relay system residues include H185 and E187.

Belongs to the glutaminase PdxT/SNO family. In terms of assembly, in the presence of PdxS, forms a dodecamer of heterodimers. Only shows activity in the heterodimer.

It catalyses the reaction aldehydo-D-ribose 5-phosphate + D-glyceraldehyde 3-phosphate + L-glutamine = pyridoxal 5'-phosphate + L-glutamate + phosphate + 3 H2O + H(+). It carries out the reaction L-glutamine + H2O = L-glutamate + NH4(+). It participates in cofactor biosynthesis; pyridoxal 5'-phosphate biosynthesis. Functionally, catalyzes the hydrolysis of glutamine to glutamate and ammonia as part of the biosynthesis of pyridoxal 5'-phosphate. The resulting ammonia molecule is channeled to the active site of PdxS. This chain is Pyridoxal 5'-phosphate synthase subunit PdxT, found in Clavibacter michiganensis subsp. michiganensis (strain NCPPB 382).